We begin with the raw amino-acid sequence, 362 residues long: Endopolygalacturonase II (362 aa).

The first 21 residues, 1–21, serve as a signal peptide directing secretion; sequence MHSFASLLAYGLVAGATFASA. A propeptide spanning residues 22 to 27 is cleaved from the precursor; it reads SPIEAR. A disulfide bridge links C30 with C45. A PbH1 1 repeat occupies 156–186; it reads ANDITFTDVTINNADGDTQGGHNTDAFDVGN. Catalysis depends on D201, which acts as the Proton donor. Residues C203 and C219 are joined by a disulfide bond. 4 PbH1 repeats span residues 209–229, 238–259, 267–289, and 301–322; these read GENI…SIGS, VKNV…RIKT, VSEI…VIQQ, and TNGV…DSGA. H223 is an active-site residue. N240 carries an N-linked (GlcNAc...) (high mannose) asparagine glycan. Cystine bridges form between C329–C334 and C353–C362.

This sequence belongs to the glycosyl hydrolase 28 family.

The protein localises to the secreted. It catalyses the reaction (1,4-alpha-D-galacturonosyl)n+m + H2O = (1,4-alpha-D-galacturonosyl)n + (1,4-alpha-D-galacturonosyl)m.. In terms of biological role, involved in maceration and soft-rotting of plant tissue. Hydrolyzes the 1,4-alpha glycosidic bonds of de-esterified pectate in the smooth region of the plant cell wall. This chain is Endopolygalacturonase II (pgaII), found in Aspergillus niger (strain ATCC 1015 / CBS 113.46 / FGSC A1144 / LSHB Ac4 / NCTC 3858a / NRRL 328 / USDA 3528.7).